Consider the following 148-residue polypeptide: Coactosin (148 aa).

Residues 1–134 form the ADF-H domain; it reads MSGFDLSEVA…VEDEIAAKIK (134 aa). Positions 71-76 match the F-loop; important for stable binding to G-actin and F-actin motif; the sequence is DEESKR. Phosphoserine is present on Ser147.

It belongs to the actin-binding proteins ADF family. Coactosin subfamily. Interacts with 14-3-3 protein 3. In terms of processing, phosphorylation at Ser-147 appears not to affect its binding to actin; however, it may regulate phagocytosis and motility.

The protein localises to the cytoplasm. Its subcellular location is the cell projection. It is found in the phagocytic cup. It localises to the pseudopodium. The protein resides in the cell membrane. The protein localises to the cytoskeleton. Functionally, actin-binding protein which is involved in F-actin stabilization. May play a role during phagocytosis and pseudopod formation by contributing to the maintenance of F-actin. The chain is Coactosin from Entamoeba histolytica (strain ATCC 30459 / HM-1:IMSS / ABRM).